The chain runs to 769 residues: DNA gyrase subunit B (769 aa).

The region spanning 414–528 (SEIYLVEGDS…NGHIYLAQPP (115 aa)) is the Toprim domain. Mg(2+)-binding residues include Glu420, Asp493, and Asp495.

The protein belongs to the type II topoisomerase GyrB family. As to quaternary structure, heterotetramer, composed of two GyrA and two GyrB chains. In the heterotetramer, GyrA contains the active site tyrosine that forms a transient covalent intermediate with DNA, while GyrB binds cofactors and catalyzes ATP hydrolysis. Mg(2+) serves as cofactor. Requires Mn(2+) as cofactor. Ca(2+) is required as a cofactor.

The protein resides in the cytoplasm. It carries out the reaction ATP-dependent breakage, passage and rejoining of double-stranded DNA.. In terms of biological role, a type II topoisomerase that negatively supercoils closed circular double-stranded (ds) DNA in an ATP-dependent manner to modulate DNA topology and maintain chromosomes in an underwound state. Negative supercoiling favors strand separation, and DNA replication, transcription, recombination and repair, all of which involve strand separation. Also able to catalyze the interconversion of other topological isomers of dsDNA rings, including catenanes and knotted rings. Type II topoisomerases break and join 2 DNA strands simultaneously in an ATP-dependent manner. The protein is DNA gyrase subunit B of Campylobacter jejuni subsp. jejuni serotype O:2 (strain ATCC 700819 / NCTC 11168).